The chain runs to 87 residues: Olfactory receptor-like protein HbT2 (87 aa).

The Cytoplasmic portion of the chain corresponds to 1 to 8; the sequence is KLWRMTGT. Residues 9 to 29 traverse the membrane as a helical segment; that stretch reads WLGGFCHSIIQIPVIIQLPFC. Topologically, residues 30–55 are extracellular; that stretch reads GPNVIDHYFRDLQPLFKLACTDTFME. The chain crosses the membrane as a helical span at residues 56 to 76; it reads GVIVLAFSGLFSVFSFLILVS. Residues 77 to 87 lie on the Cytoplasmic side of the membrane; that stretch reads SYIVILVNLRN.

This sequence belongs to the G-protein coupled receptor 1 family.

It is found in the cell membrane. Odorant receptor. This chain is Olfactory receptor-like protein HbT2, found in Apis mellifera ligustica (Common honeybee).